A 592-amino-acid chain; its full sequence is Membrane protein insertase YidC (592 aa).

A helical membrane pass occupies residues 7–27; sequence NYFVAIALSVLILVAWQYFYV. The segment at 38 to 74 is disordered; sequence AEKAQQTQQVQPQQGGQQPAPGQALPGGAVPGESRDQ. The span at 41-69 shows a compositional bias: low complexity; that stretch reads AQQTQQVQPQQGGQQPAPGQALPGGAVPG. A run of 4 helical transmembrane segments spans residues 367–387, 441–461, 486–506, and 530–550; these read LFGNFGVAILVTTIVVKLIFF, WPILIQIPVFFALYKVIYITI, LFGLLPFDGPAFLHLGIWPII, and FTWMPLVFTFMLASFPAGLVI.

Belongs to the OXA1/ALB3/YidC family. Type 1 subfamily. Interacts with the Sec translocase complex via SecD. Specifically interacts with transmembrane segments of nascent integral membrane proteins during membrane integration.

It localises to the cell inner membrane. Its function is as follows. Required for the insertion and/or proper folding and/or complex formation of integral membrane proteins into the membrane. Involved in integration of membrane proteins that insert both dependently and independently of the Sec translocase complex, as well as at least some lipoproteins. Aids folding of multispanning membrane proteins. This is Membrane protein insertase YidC from Sinorhizobium fredii (strain NBRC 101917 / NGR234).